The following is a 432-amino-acid chain: Tryptophan--tRNA ligase, cytoplasmic (432 aa).

The 'HIGH' region signature appears at 111 to 120 (PSSDSMHLGH). The 'KMSKS' region motif lies at 295–299 (KMSAS).

It belongs to the class-I aminoacyl-tRNA synthetase family. As to quaternary structure, homodimer.

The protein resides in the cytoplasm. The enzyme catalyses tRNA(Trp) + L-tryptophan + ATP = L-tryptophyl-tRNA(Trp) + AMP + diphosphate + H(+). This is Tryptophan--tRNA ligase, cytoplasmic (WRS1) from Saccharomyces cerevisiae (strain ATCC 204508 / S288c) (Baker's yeast).